A 758-amino-acid chain; its full sequence is Long-chain-alcohol oxidase FAO1 (758 aa).

2 consecutive transmembrane segments (helical) span residues 102-122 (IVLRILTFRLGTLLLCGLVCL) and 155-175 (PLARIGFMMIKAIFLFYYFTW). Residue 246 to 261 (CDAVVVGSGCGGGVAA) coordinates FAD. Catalysis depends on H689, which acts as the Proton acceptor.

Belongs to the GMC oxidoreductase family.

The protein resides in the membrane. The enzyme catalyses a long-chain primary fatty alcohol + O2 = a long-chain fatty aldehyde + H2O2. In terms of biological role, long-chain fatty alcohol oxidase involved in the omega-oxidation pathway of lipid degradation. The sequence is that of Long-chain-alcohol oxidase FAO1 (FAO1) from Arabidopsis thaliana (Mouse-ear cress).